A 166-amino-acid polypeptide reads, in one-letter code: NADH-quinone oxidoreductase subunit A (166 aa).

Helical transmembrane passes span F16–F36, F68–W88, and I98–V118. Residues R141–R166 form a disordered region.

It belongs to the complex I subunit 3 family. NDH-1 is composed of 13 different subunits. Subunits NuoA, H, J, K, L, M, N constitute the membrane sector of the complex.

The protein localises to the cell inner membrane. The catalysed reaction is a quinone + NADH + 5 H(+)(in) = a quinol + NAD(+) + 4 H(+)(out). In terms of biological role, NDH-1 shuttles electrons from NADH, via FMN and iron-sulfur (Fe-S) centers, to quinones in the respiratory chain. The immediate electron acceptor for the enzyme in this species is believed to be ubiquinone. Couples the redox reaction to proton translocation (for every two electrons transferred, four hydrogen ions are translocated across the cytoplasmic membrane), and thus conserves the redox energy in a proton gradient. This chain is NADH-quinone oxidoreductase subunit A, found in Yersinia pseudotuberculosis serotype IB (strain PB1/+).